We begin with the raw amino-acid sequence, 604 residues long: Glutamyl-tRNA(Gln) amidotransferase subunit B, mitochondrial (604 aa).

A mitochondrion-targeting transit peptide spans 1–48; sequence MIRQCLSRRGAYSRYRLAARGVELAEPFHHQSSRPQGRRNWSSSPRCS. The tract at residues 28–57 is disordered; it reads FHHQSSRPQGRRNWSSSPRCSLDIRTDTPR. Positions 33–46 are enriched in polar residues; that stretch reads SRPQGRRNWSSSPR.

Belongs to the GatB/GatE family. GatB subfamily. In terms of assembly, subunit of the heterotrimeric GatCAB amidotransferase (AdT) complex, composed of A, B and C subunits.

Its subcellular location is the mitochondrion. The enzyme catalyses L-glutamyl-tRNA(Gln) + L-glutamine + ATP + H2O = L-glutaminyl-tRNA(Gln) + L-glutamate + ADP + phosphate + H(+). Its function is as follows. Allows the formation of correctly charged Gln-tRNA(Gln) through the transamidation of misacylated Glu-tRNA(Gln) in the mitochondria. The reaction takes place in the presence of glutamine and ATP through an activated gamma-phospho-Glu-tRNA(Gln). This chain is Glutamyl-tRNA(Gln) amidotransferase subunit B, mitochondrial, found in Blastomyces gilchristii (strain SLH14081) (Blastomyces dermatitidis).